The sequence spans 253 residues: MTPVNQPTRQIVLDTETTGMNQFGAHYEGHCIIEIGAVEMINRRLTGNNFHIYIKPNRPVDPDAIKVHGITDEMLADKPMFNEVAQQFIDYIQGAELLIHNAPFDVGFMDYEFKKLNLNINTDAICMVTDTLQMARQMYPGKRNSLDALCDRLGIDNSKRTLHGALLDAEILADVYLTMTGGQTSLFDENEPEIAVVAVQEQIQSAVAFSQDLKRLQPNADELQAHLDYLLLLNKKSKGNCLWEKRLAELKTH.

The a divalent metal cation site is built by D14 and E16. D14, E16, D63, and H68 together coordinate substrate. The Proton acceptor role is filled by H163. D168 is a binding site for a divalent metal cation. A substrate-binding site is contributed by D168.

In terms of assembly, DNA polymerase III contains a core (composed of alpha, epsilon and theta chains) that associates with a tau subunit. This core dimerizes to form the POLIII' complex. PolIII' associates with the gamma complex (composed of gamma, delta, delta', psi and chi chains) and with the beta chain to form the complete DNA polymerase III complex. Requires Mg(2+) as cofactor. The cofactor is Mn(2+).

It carries out the reaction DNA(n) + a 2'-deoxyribonucleoside 5'-triphosphate = DNA(n+1) + diphosphate. Functionally, DNA polymerase III is a complex, multichain enzyme responsible for most of the replicative synthesis in bacteria. The epsilon subunit contain the editing function and is a proofreading 3'-5' exonuclease. The protein is DNA polymerase III subunit epsilon (dnaQ) of Pasteurella multocida (strain Pm70).